A 195-amino-acid chain; its full sequence is CASP-like protein 1B1 (195 aa).

At 1–22 the chain is on the cytoplasmic side; it reads MGLQNEEKLELGCTGLQPKPKK. Residues 23–43 traverse the membrane as a helical segment; the sequence is WVLLMVRVVAFLATAAATLVM. The Extracellular portion of the chain corresponds to 44–75; sequence ALNKETKTLVVATVGNTPIKVTLTAKFQHTPA. The chain crosses the membrane as a helical span at residues 76–96; sequence FVFFVIANGMASFHNLLMIMV. At 97-109 the chain is on the cytoplasmic side; that stretch reads ELCGQKLDYKGMR. A helical transmembrane segment spans residues 110-130; it reads LAMVAILDMMTVALVSGGASA. Residues 131–163 lie on the Extracellular side of the membrane; it reads ATFMAELGKNGNSHARWDKICDKFETFCDHGGA. A helical transmembrane segment spans residues 164–184; the sequence is ALIASSAGLILMMIISVMSIM. At 185-195 the chain is on the cytoplasmic side; it reads KLLIKPKSDSS.

It belongs to the Casparian strip membrane proteins (CASP) family. As to quaternary structure, homodimer and heterodimers.

Its subcellular location is the cell membrane. This is CASP-like protein 1B1 from Populus trichocarpa (Western balsam poplar).